A 362-amino-acid chain; its full sequence is Adenosine deaminase (362 aa).

Zn(2+)-binding residues include His19 and His21. His21, Asp23, and Gly181 together coordinate substrate. Zn(2+) is bound at residue His208. The Proton donor role is filled by Glu211. Asp300 lines the Zn(2+) pocket.

Belongs to the metallo-dependent hydrolases superfamily. Adenosine and AMP deaminases family. Adenosine deaminase subfamily. It depends on Zn(2+) as a cofactor.

It catalyses the reaction adenosine + H2O + H(+) = inosine + NH4(+). It carries out the reaction 2'-deoxyadenosine + H2O + H(+) = 2'-deoxyinosine + NH4(+). Functionally, catalyzes the hydrolytic deamination of adenosine and 2-deoxyadenosine. The sequence is that of Adenosine deaminase from Mycobacterium leprae (strain TN).